A 273-amino-acid polypeptide reads, in one-letter code: 3-methyl-2-oxobutanoate hydroxymethyltransferase 1 (273 aa).

Residues aspartate 49 and aspartate 88 each contribute to the Mg(2+) site. 3-methyl-2-oxobutanoate-binding positions include 49-50 (DS), aspartate 88, and lysine 118. Glutamate 120 is a Mg(2+) binding site. The active-site Proton acceptor is the glutamate 187.

The protein belongs to the PanB family. Homodecamer; pentamer of dimers. Mg(2+) serves as cofactor.

The protein resides in the cytoplasm. It catalyses the reaction 3-methyl-2-oxobutanoate + (6R)-5,10-methylene-5,6,7,8-tetrahydrofolate + H2O = 2-dehydropantoate + (6S)-5,6,7,8-tetrahydrofolate. Its pathway is cofactor biosynthesis; (R)-pantothenate biosynthesis; (R)-pantoate from 3-methyl-2-oxobutanoate: step 1/2. Its function is as follows. Catalyzes the reversible reaction in which hydroxymethyl group from 5,10-methylenetetrahydrofolate is transferred onto alpha-ketoisovalerate to form ketopantoate. In Pseudomonas aeruginosa (strain UCBPP-PA14), this protein is 3-methyl-2-oxobutanoate hydroxymethyltransferase 1.